We begin with the raw amino-acid sequence, 490 residues long: MSQSVSERTRIKSDRYESGVIPYAKMGYWDASYTVQDTDVLALFRITPQPGVDPVEAAAAVAGESSTATWTVVWTDLLTACERYRAKAYRVDPVPNTTDQYFAFIAYECDLFEEGSLANLTASIIGNVFGFKAVAALRLEDMRIPYAYLKTFQGPATGIVVERERLNKYGAPLLGATVKPKLGLSGKNYGRVVYEGLKGGLDFLKDDENINSQPFMRWRERFLYCLEGINRASAATGEVKGSYLNITAATMEEVYKRADYAKQIGSVIVIIDLVMGYTAIQSAAIWARDNDMLLHLHRAGNSTYARQKNHGINFRVICKWMRMSGVDHIHAGTVVGKLEGDPLMIKGFYDVLRLTTLDVNLPYGIFFDMSWASLRKCMPVASGGIHCGQMHQLIHYLGDDVVLQFGGGTIGHPDGIQAGATANRVALEAMVLARNEGADYFNPQVGPQILREAAKKCGPLQTALDLWKDISFNYTSTDTADFAETPTANV.

Asn127 and Thr177 together coordinate substrate. The active-site Proton acceptor is the Lys179. Lys181 serves as a coordination point for substrate. Lys205, Asp207, and Glu208 together coordinate Mg(2+). At Lys205 the chain carries N6-carboxylysine. His297 (proton acceptor) is an active-site residue. Residues Arg298, His330, and Ser382 each coordinate substrate.

The protein belongs to the RuBisCO large chain family. Type I subfamily. Heterohexadecamer of 8 large chains and 8 small chains. Mg(2+) serves as cofactor.

It is found in the plastid. It localises to the chloroplast. It catalyses the reaction 2 (2R)-3-phosphoglycerate + 2 H(+) = D-ribulose 1,5-bisphosphate + CO2 + H2O. It carries out the reaction D-ribulose 1,5-bisphosphate + O2 = 2-phosphoglycolate + (2R)-3-phosphoglycerate + 2 H(+). Functionally, ruBisCO catalyzes two reactions: the carboxylation of D-ribulose 1,5-bisphosphate, the primary event in carbon dioxide fixation, as well as the oxidative fragmentation of the pentose substrate in the photorespiration process. Both reactions occur simultaneously and in competition at the same active site. The protein is Ribulose bisphosphate carboxylase large chain of Trieres chinensis (Marine centric diatom).